Here is a 294-residue protein sequence, read N- to C-terminus: Probable 3-hydroxyisobutyrate dehydrogenase (294 aa).

NAD(+)-binding positions include Thr-3–Asp-31 and Thr-93. Lys-168 is a catalytic residue. Lys-243 serves as a coordination point for NAD(+).

Belongs to the HIBADH-related family.

It carries out the reaction 3-hydroxy-2-methylpropanoate + NAD(+) = 2-methyl-3-oxopropanoate + NADH + H(+). It participates in amino-acid degradation; L-valine degradation. The protein is Probable 3-hydroxyisobutyrate dehydrogenase (mmsB) of Mycobacterium bovis (strain ATCC BAA-935 / AF2122/97).